A 317-amino-acid chain; its full sequence is uncharacterized protein (317 aa).

Transmembrane regions (helical) follow at residues 18–38 (FWLISLVVAFLPLGLYGLVII), 58–78 (IILSWMLFFLWFNVIVNGFIF), 92–112 (FLGSFIYSGGNNFGGVSWWSF), 130–150 (LFSASFLLTTSSSIYELAWAV), 159–179 (LFHIKVQPISILLAVIFKLLP), 202–222 (CSFLNPFKIKTLFIPVLLSTV), and 252–272 (NLLNGVFLLVGLLLFSILLIA).

This sequence belongs to the CbiQ family.

The protein resides in the cell membrane. This is an uncharacterized protein from Mycoplasma genitalium (strain ATCC 33530 / DSM 19775 / NCTC 10195 / G37) (Mycoplasmoides genitalium).